A 174-amino-acid chain; its full sequence is ATP-dependent protease subunit HslV (174 aa).

The active site involves Thr2. Na(+) is bound by residues Gly157, Cys160, and Thr163.

Belongs to the peptidase T1B family. HslV subfamily. In terms of assembly, a double ring-shaped homohexamer of HslV is capped on each side by a ring-shaped HslU homohexamer. The assembly of the HslU/HslV complex is dependent on binding of ATP.

The protein localises to the cytoplasm. The catalysed reaction is ATP-dependent cleavage of peptide bonds with broad specificity.. Allosterically activated by HslU binding. Protease subunit of a proteasome-like degradation complex believed to be a general protein degrading machinery. The sequence is that of ATP-dependent protease subunit HslV from Yersinia enterocolitica serotype O:8 / biotype 1B (strain NCTC 13174 / 8081).